Consider the following 428-residue polypeptide: Putative zinc metalloprotease LL2128 (428 aa).

His19 contacts Zn(2+). Glu20 is a catalytic residue. Position 23 (His23) interacts with Zn(2+). 3 helical membrane passes run 188 to 210, 354 to 376, and 401 to 423; these read GPLN…QGGV, IVYL…IPVL, and IITM…NDIL. In terms of domain architecture, PDZ spans 188–282; that stretch reads GPLNNFILGI…SETLSVTPKK (95 aa).

The protein belongs to the peptidase M50B family. Zn(2+) is required as a cofactor.

It is found in the cell membrane. The sequence is that of Putative zinc metalloprotease LL2128 from Lactococcus lactis subsp. lactis (strain IL1403) (Streptococcus lactis).